The chain runs to 100 residues: Replication restart protein PriB (100 aa).

The 96-residue stretch at 4–99 (TNLVSLAALI…LRIQNIKEYK (96 aa)) folds into the SSB domain.

The protein belongs to the PriB family. As to quaternary structure, homodimer. Component of the replication restart primosome. Primosome assembly occurs via a 'hand-off' mechanism. PriA binds to replication forks, subsequently PriB then DnaT bind; DnaT then displaces ssDNA to generate the helicase loading substrate. Interacts with PriA with high affinity, independent of DNA presence.

PriA:PriB complex-catalyzed duplex DNA winding is inhibited by CGS 15943 (CHEBI:131351); PriA is the drug target. In terms of biological role, stimulates the DNA unwinding activity of PriA helicase, which does not seem to require single-stranded (ss)DNA-binding by PriB. Activates DNA-dependent ATP hydrolysis catalyzed by PriA. Weakly binds ssDNA. Weakly binds double-stranded (ds)DNA, a partial duplex DNA with a 3' ssDNA overhang, and a forked DNA structure with fully duplex leading and lagging strand arms in vitro. Involved in the restart of stalled replication forks, which reloads the replicative helicase on sites other than the origin of replication; the PriA-PriB pathway is the major replication restart pathway. During primosome assembly it facilitates complex formation between PriA and DnaT on DNA; stabilizes PriA on DNA. Stimulates the DNA unwinding activity of PriA helicase. This Neisseria gonorrhoeae (strain ATCC 700825 / FA 1090) protein is Replication restart protein PriB.